A 343-amino-acid polypeptide reads, in one-letter code: L-threonine 3-dehydrogenase (343 aa).

Cys40 contributes to the Zn(2+) binding site. Active-site charge relay system residues include Thr42 and His45. Residues His65, Glu66, Cys95, Cys98, Cys101, and Cys109 each coordinate Zn(2+). NAD(+) contacts are provided by residues Ile177, Asp197, Arg202, 264 to 266 (LGI), and 288 to 289 (IY).

The protein belongs to the zinc-containing alcohol dehydrogenase family. As to quaternary structure, homotetramer. The cofactor is Zn(2+).

The protein localises to the cytoplasm. The enzyme catalyses L-threonine + NAD(+) = (2S)-2-amino-3-oxobutanoate + NADH + H(+). Its pathway is amino-acid degradation; L-threonine degradation via oxydo-reductase pathway; glycine from L-threonine: step 1/2. Catalyzes the NAD(+)-dependent oxidation of L-threonine to 2-amino-3-ketobutyrate. The polypeptide is L-threonine 3-dehydrogenase (Vibrio vulnificus (strain YJ016)).